Reading from the N-terminus, the 406-residue chain is Putative gustatory receptor 59f (406 aa).

The Cytoplasmic portion of the chain corresponds to 1–36; that stretch reads MRSSATKGAKLKNSPRERLSSFNPQYAERYKELYRT. A helical transmembrane segment spans residues 37-57; it reads LFWLLLISVLANTAPITILPG. Topologically, residues 58-69 are extracellular; sequence CPNRFYRLVHLS. The helical transmembrane segment at 70-90 threads the bilayer; sequence WMILWYGLFVLGSYWEFVLVT. The Cytoplasmic portion of the chain corresponds to 91 to 99; the sequence is TQRVSLDRY. The helical transmembrane segment at 100-120 threads the bilayer; it reads LNAIESAIYVVHIFSIMLLTW. Over 121-154 the chain is Extracellular; the sequence is QCRNWAPKLMTNIVTSDLNRAYTIDCNRTKRFIR. Asn-147 is a glycosylation site (N-linked (GlcNAc...) asparagine). Residues 155 to 175 traverse the membrane as a helical segment; sequence LQLFLVGIFACLAIFFNIWTH. At 176–189 the chain is on the cytoplasmic side; the sequence is KFVVYRSILSINSY. Residues 190–210 traverse the membrane as a helical segment; that stretch reads VMPNIISSISFAQYYLLLQGI. Over 211-259 the chain is Extracellular; that stretch reads AWRQRRLTEGLERELTHLHSPRISEVQKIRMHHANLIDFTKAVNRTFQY. The N-linked (GlcNAc...) asparagine glycan is linked to Asn-254. Residues 260–280 form a helical membrane-spanning segment; the sequence is SILLLFVGCFLNFNLVLFLVY. The Cytoplasmic portion of the chain corresponds to 281–364; that stretch reads QGIENPSMAD…RQHVVCGVIN (84 aa). A helical transmembrane segment spans residues 365 to 385; the sequence is LDLKFLTTLLVASADFFIFLL. Topologically, residues 386-406 are extracellular; the sequence is QYDVTYEALSKSVQGNVTRYK. Residue Asn-401 is glycosylated (N-linked (GlcNAc...) asparagine).

It belongs to the insect chemoreceptor superfamily. Gustatory receptor (GR) family. Gr10a subfamily. In terms of tissue distribution, expressed in the adult abdomen and wing. In larvae, is expressed in neurons of the terminal external chemosensory organ.

Its subcellular location is the cell membrane. In terms of biological role, probable gustatory receptor which mediates acceptance or avoidance behavior, depending on its substrates. In Drosophila melanogaster (Fruit fly), this protein is Putative gustatory receptor 59f (Gr59f).